We begin with the raw amino-acid sequence, 270 residues long: MDNKIVYVVSDSVGETADLVVRAAMGQFPFAPDIRRVPYVEDTGTLKEVISIAKSNRALICFTLVKPDMRQYLLTEAAKEGVEAYDIIGPLIDQIAEITRQVPRYEPGIVRKLDEEYFKKIEAIEFAVKYDDGRDARGILKADIVLIGVSRTSKTPLSQYLAHNKRLKVANVPLVPEVDPPEELYQVSKEKCFGLKINPEKLNHIRKERLKSLGLSDGATYANINRIKEEIDHFEKVINKINCQVIDVSNKAIEETANIIVNAVQNQRMF.

Residue 148 to 155 (GVSRTSKT) coordinates ADP.

It belongs to the pyruvate, phosphate/water dikinase regulatory protein family. PDRP subfamily.

The catalysed reaction is N(tele)-phospho-L-histidyl/L-threonyl-[pyruvate, phosphate dikinase] + ADP = N(tele)-phospho-L-histidyl/O-phospho-L-threonyl-[pyruvate, phosphate dikinase] + AMP + H(+). It catalyses the reaction N(tele)-phospho-L-histidyl/O-phospho-L-threonyl-[pyruvate, phosphate dikinase] + phosphate + H(+) = N(tele)-phospho-L-histidyl/L-threonyl-[pyruvate, phosphate dikinase] + diphosphate. Functionally, bifunctional serine/threonine kinase and phosphorylase involved in the regulation of the pyruvate, phosphate dikinase (PPDK) by catalyzing its phosphorylation/dephosphorylation. The chain is Putative pyruvate, phosphate dikinase regulatory protein from Bacillus cytotoxicus (strain DSM 22905 / CIP 110041 / 391-98 / NVH 391-98).